A 504-amino-acid polypeptide reads, in one-letter code: MEKFQGYLEFDGARQQSFLYPLFFREYIYVLAYDHGLNRLNRNRSIFFENADYDKKYSSLIVKRLILRMYEQNRLIIPTKDLNQNHFLGHTSLFYYQIISVLFAVIVEIPFSLRLGSSFEGKQLKKSDNLQSIHSIFPFLEDKFSHFNYVLDLQIPYPIHLEILVQTLRYRVKDASSLHFFRFCLYEYCNWKNFYIKKKAILNPRIFLFLYNSHICEYESIFFFLRKRSSHLRSTSYEVLFERILFYGKIQHFLKVFVNNFPAILGLLKDPFIHYVRYHGRCILATKDTPLLMNKWKYYFVNLWQCYFSVWFQSQKVNINQLSKDNLEFLGYLSSLRLNPLVVRSQMLENSFLMDNVRIKLDTKIPISSISRSLAKDKFCNVLGHPISKATWTDSSDSDILNRFVRICRNISHYYSGSSKKNNLYRIKYILRQSCVKTLARKHKSTVRAFLKGLGSGLLEEFLTGEDQILSLIFPRSYYASKRLYRVRIWYLDILYLNDLVNHE.

It belongs to the intron maturase 2 family. MatK subfamily.

The protein resides in the plastid. It localises to the chloroplast. Its function is as follows. Usually encoded in the trnK tRNA gene intron. Probably assists in splicing its own and other chloroplast group II introns. This Lepidium virginicum (Virginia pepperweed) protein is Maturase K.